The following is a 321-amino-acid chain: Methionine import ATP-binding protein MetN (321 aa).

In terms of domain architecture, ABC transporter spans 2–237; that stretch reads ISIKNVNKYY…NTKGLRKLIG (236 aa). Position 34-41 (34-41) interacts with ATP; the sequence is GHSGAGKS.

This sequence belongs to the ABC transporter superfamily. Methionine importer (TC 3.A.1.24) family. As to quaternary structure, the complex is composed of two ATP-binding proteins (MetN), two transmembrane proteins (MetI) and a solute-binding protein (MetQ).

It localises to the cell membrane. It catalyses the reaction L-methionine(out) + ATP + H2O = L-methionine(in) + ADP + phosphate + H(+). It carries out the reaction D-methionine(out) + ATP + H2O = D-methionine(in) + ADP + phosphate + H(+). Functionally, part of the ABC transporter complex MetNIQ involved in methionine import. Responsible for energy coupling to the transport system. The polypeptide is Methionine import ATP-binding protein MetN (Clostridioides difficile (strain 630) (Peptoclostridium difficile)).